We begin with the raw amino-acid sequence, 157 residues long: Phosphopantetheine adenylyltransferase (157 aa).

Threonine 10 contacts substrate. ATP is bound by residues 10 to 11 (TF) and histidine 18. The substrate site is built by lysine 42, leucine 74, and arginine 88. Residues 89–91 (GLR), glutamate 99, and 124–130 (NAFISSS) each bind ATP.

It belongs to the bacterial CoaD family. Homohexamer. Mg(2+) serves as cofactor.

It localises to the cytoplasm. It carries out the reaction (R)-4'-phosphopantetheine + ATP + H(+) = 3'-dephospho-CoA + diphosphate. It participates in cofactor biosynthesis; coenzyme A biosynthesis; CoA from (R)-pantothenate: step 4/5. Reversibly transfers an adenylyl group from ATP to 4'-phosphopantetheine, yielding dephospho-CoA (dPCoA) and pyrophosphate. The chain is Phosphopantetheine adenylyltransferase from Helicobacter acinonychis (strain Sheeba).